We begin with the raw amino-acid sequence, 270 residues long: Phosphate import ATP-binding protein PstB 2 (270 aa).

The 241-residue stretch at 25 to 265 (LQAKDINIYY…PEKKQTEDYI (241 aa)) folds into the ABC transporter domain. 57-64 (GPSGCGKS) is an ATP binding site.

This sequence belongs to the ABC transporter superfamily. Phosphate importer (TC 3.A.1.7) family. As to quaternary structure, the complex is composed of two ATP-binding proteins (PstB), two transmembrane proteins (PstC and PstA) and a solute-binding protein (PstS).

Its subcellular location is the cell membrane. It carries out the reaction phosphate(out) + ATP + H2O = ADP + 2 phosphate(in) + H(+). Part of the ABC transporter complex PstSACB involved in phosphate import. Responsible for energy coupling to the transport system. The protein is Phosphate import ATP-binding protein PstB 2 of Shouchella clausii (strain KSM-K16) (Alkalihalobacillus clausii).